We begin with the raw amino-acid sequence, 121 residues long: uncharacterized protein (121 aa).

The tract at residues 85 to 111 is disordered; the sequence is NANNDDYESPYKTPKIKSNPSLDSSGS. A compositionally biased stretch (polar residues) spans 100-111; that stretch reads IKSNPSLDSSGS.

This is an uncharacterized protein from Dictyostelium discoideum (Social amoeba).